Consider the following 174-residue polypeptide: uncharacterized protein (174 aa).

This is an uncharacterized protein from Mycobacterium tuberculosis (strain CDC 1551 / Oshkosh).